The primary structure comprises 453 residues: Bifunctional protein GlmU (453 aa).

The pyrophosphorylase stretch occupies residues Met-1–Lys-225. UDP-N-acetyl-alpha-D-glucosamine-binding positions include Leu-6–Gly-9, Lys-20, Gln-71, Gly-76–Thr-77, Tyr-98–Asp-100, Gly-135, Glu-150, Asn-165, and Asn-223. Mg(2+) is bound at residue Asp-100. Asn-223 is a Mg(2+) binding site. Residues Ala-226–Asp-246 are linker. Residues Gly-247–Ser-453 are N-acetyltransferase. UDP-N-acetyl-alpha-D-glucosamine contacts are provided by Arg-329 and Lys-347. His-359 (proton acceptor) is an active-site residue. Tyr-362 and Asn-373 together coordinate UDP-N-acetyl-alpha-D-glucosamine. Acetyl-CoA-binding positions include Ala-376, Asn-382 to Tyr-383, Ser-401, and Ala-419.

In the N-terminal section; belongs to the N-acetylglucosamine-1-phosphate uridyltransferase family. It in the C-terminal section; belongs to the transferase hexapeptide repeat family. As to quaternary structure, homotrimer. It depends on Mg(2+) as a cofactor.

Its subcellular location is the cytoplasm. The catalysed reaction is alpha-D-glucosamine 1-phosphate + acetyl-CoA = N-acetyl-alpha-D-glucosamine 1-phosphate + CoA + H(+). The enzyme catalyses N-acetyl-alpha-D-glucosamine 1-phosphate + UTP + H(+) = UDP-N-acetyl-alpha-D-glucosamine + diphosphate. The protein operates within nucleotide-sugar biosynthesis; UDP-N-acetyl-alpha-D-glucosamine biosynthesis; N-acetyl-alpha-D-glucosamine 1-phosphate from alpha-D-glucosamine 6-phosphate (route II): step 2/2. It participates in nucleotide-sugar biosynthesis; UDP-N-acetyl-alpha-D-glucosamine biosynthesis; UDP-N-acetyl-alpha-D-glucosamine from N-acetyl-alpha-D-glucosamine 1-phosphate: step 1/1. It functions in the pathway bacterial outer membrane biogenesis; LPS lipid A biosynthesis. In terms of biological role, catalyzes the last two sequential reactions in the de novo biosynthetic pathway for UDP-N-acetylglucosamine (UDP-GlcNAc). The C-terminal domain catalyzes the transfer of acetyl group from acetyl coenzyme A to glucosamine-1-phosphate (GlcN-1-P) to produce N-acetylglucosamine-1-phosphate (GlcNAc-1-P), which is converted into UDP-GlcNAc by the transfer of uridine 5-monophosphate (from uridine 5-triphosphate), a reaction catalyzed by the N-terminal domain. The protein is Bifunctional protein GlmU of Burkholderia ambifaria (strain ATCC BAA-244 / DSM 16087 / CCUG 44356 / LMG 19182 / AMMD) (Burkholderia cepacia (strain AMMD)).